Reading from the N-terminus, the 311-residue chain is ATP synthase gamma chain (311 aa).

C67 and C138 are disulfide-bonded.

Belongs to the ATPase gamma chain family. As to quaternary structure, F-type ATPases have 2 components, CF(1) - the catalytic core - and CF(0) - the membrane proton channel. CF(1) has five subunits: alpha(3), beta(3), gamma(1), delta(1), epsilon(1). CF(0) has three main subunits: a, b and c.

The protein resides in the cellular thylakoid membrane. Thiol-modulation by raising the activation threshold of the enzyme upon oxidation of the cysteines, thereby preventing wasteful ATP-hydrolysis. Functionally, produces ATP from ADP in the presence of a proton gradient across the membrane. The gamma chain is believed to be important in regulating ATPase activity and the flow of protons through the CF(0) complex. The sequence is that of ATP synthase gamma chain (atpG) from Arthrospira platensis (Spirulina platensis).